A 557-amino-acid polypeptide reads, in one-letter code: Urocanate hydratase (557 aa).

The segment at 1–20 (MSNPRHNEREVRSPRGDELN) is disordered. Residues 52–53 (GG), Q130, 176–178 (GMG), E196, R201, 242–243 (NA), 263–267 (QTSAH), 273–274 (YL), and Y322 contribute to the NAD(+) site. Residue C410 is part of the active site. G492 is an NAD(+) binding site.

It belongs to the urocanase family. The cofactor is NAD(+).

The protein localises to the cytoplasm. It catalyses the reaction 4-imidazolone-5-propanoate = trans-urocanate + H2O. The protein operates within amino-acid degradation; L-histidine degradation into L-glutamate; N-formimidoyl-L-glutamate from L-histidine: step 2/3. Catalyzes the conversion of urocanate to 4-imidazolone-5-propionate. This chain is Urocanate hydratase, found in Brucella melitensis biotype 1 (strain ATCC 23456 / CCUG 17765 / NCTC 10094 / 16M).